The following is a 152-amino-acid chain: SKP1-like protein 10 (152 aa).

The segment at 94–152 (IMAANYLNIKSLLDLACQTVADMIKDNTVEHTRKFFNIENDYTHEEEEAVRRENQWGFE) is interaction with the F-box domain of F-box proteins.

This sequence belongs to the SKP1 family. In terms of assembly, part of a SCF (SKP1-cullin-F-box) protein ligase complex. Interacts with CPR1/CPR30. Expressed in young seedlings, roots, leaves, floral stems, inflorescences, and siliques.

The protein localises to the nucleus. Its pathway is protein modification; protein ubiquitination. Functionally, involved in ubiquitination and subsequent proteasomal degradation of target proteins. Together with CUL1, RBX1 and a F-box protein, it forms a SCF E3 ubiquitin ligase complex. The functional specificity of this complex depends on the type of F-box protein. In the SCF complex, it serves as an adapter that links the F-box protein to CUL1. The sequence is that of SKP1-like protein 10 (ASK10) from Arabidopsis thaliana (Mouse-ear cress).